Here is a 500-residue protein sequence, read N- to C-terminus: Probable trehalose-phosphate phosphatase 8 (500 aa).

The protein belongs to the trehalose phosphatase family. A divalent metal cation is required as a cofactor.

The enzyme catalyses alpha,alpha-trehalose 6-phosphate + H2O = alpha,alpha-trehalose + phosphate. Its pathway is glycan biosynthesis; trehalose biosynthesis. In terms of biological role, removes the phosphate from trehalose 6-phosphate to produce free trehalose. Trehalose accumulation in plant may improve abiotic stress tolerance. The sequence is that of Probable trehalose-phosphate phosphatase 8 (TPP8) from Oryza sativa subsp. japonica (Rice).